Here is a 319-residue protein sequence, read N- to C-terminus: Biotin synthase (319 aa).

The Radical SAM core domain maps to 44–273; it reads IHGDGIDLCS…EAKIRLAGGR (230 aa). [4Fe-4S] cluster-binding residues include Cys-62, Cys-66, and Cys-69. Ser-106, Cys-138, Cys-198, and Arg-268 together coordinate [2Fe-2S] cluster.

The protein belongs to the radical SAM superfamily. Biotin synthase family. In terms of assembly, homodimer. [4Fe-4S] cluster is required as a cofactor. [2Fe-2S] cluster serves as cofactor.

It catalyses the reaction (4R,5S)-dethiobiotin + (sulfur carrier)-SH + 2 reduced [2Fe-2S]-[ferredoxin] + 2 S-adenosyl-L-methionine = (sulfur carrier)-H + biotin + 2 5'-deoxyadenosine + 2 L-methionine + 2 oxidized [2Fe-2S]-[ferredoxin]. It functions in the pathway cofactor biosynthesis; biotin biosynthesis; biotin from 7,8-diaminononanoate: step 2/2. In terms of biological role, catalyzes the conversion of dethiobiotin (DTB) to biotin by the insertion of a sulfur atom into dethiobiotin via a radical-based mechanism. The chain is Biotin synthase from Clostridium perfringens (strain ATCC 13124 / DSM 756 / JCM 1290 / NCIMB 6125 / NCTC 8237 / Type A).